The sequence spans 289 residues: RNA-binding protein CP29B, chloroplastic (289 aa).

A chloroplast-targeting transit peptide spans 1–62 (MAASASSLAL…NSPASRFARN (62 aa)). Phosphoserine is present on residues Ser6 and Ser12. Val63 carries the post-translational modification N-acetylvaline. Residues 91–169 (LKLFVGNLPF…RPLRVNAGPP (79 aa)) enclose the RRM 1 domain. The disordered stretch occupies residues 158–199 (DGRPLRVNAGPPPPKREDGFSRGPRSSFGSSGSGYGGGGGSG). Residues 170-203 (PPKREDGFSRGPRSSFGSSGSGYGGGGGSGAGSG) form a linker (Gly-rich) region. Over residues 178–187 (SRGPRSSFGS) the composition is skewed to low complexity. Positions 188–199 (SGSGYGGGGGSG) are enriched in gly residues. Positions 204-282 (NRVYVGNLSW…RQIRVSEAEA (79 aa)) constitute an RRM 2 domain.

ADP-ribosylated by the Pseudomonas syringae type III effector HopU1. ADP-ribosylation reduces the ability of the protein to bind RNA. In terms of processing, phosphorylated on tyrosine residues after treatment with abscisic acid (ABA). Phosphorylation may reduce the ability of the protein to bind RNA.

Its subcellular location is the plastid. It is found in the chloroplast. In terms of biological role, could be involved in splicing and/or processing of chloroplast RNA's. The polypeptide is RNA-binding protein CP29B, chloroplastic (Arabidopsis thaliana (Mouse-ear cress)).